Here is a 510-residue protein sequence, read N- to C-terminus: 2,3-bisphosphoglycerate-independent phosphoglycerate mutase (510 aa).

Mn(2+) is bound by residues aspartate 12 and serine 62. The active-site Phosphoserine intermediate is the serine 62. Residues histidine 123, 153 to 154 (RD), arginine 185, arginine 191, 261 to 264 (RPDR), and lysine 336 each bind substrate. Positions 403, 407, 444, 445, and 462 each coordinate Mn(2+).

It belongs to the BPG-independent phosphoglycerate mutase family. In terms of assembly, monomer. The cofactor is Mn(2+).

The catalysed reaction is (2R)-2-phosphoglycerate = (2R)-3-phosphoglycerate. It participates in carbohydrate degradation; glycolysis; pyruvate from D-glyceraldehyde 3-phosphate: step 3/5. In terms of biological role, essential for rapid growth and for sporulation. Catalyzes the interconversion of 2-phosphoglycerate and 3-phosphoglycerate. The sequence is that of 2,3-bisphosphoglycerate-independent phosphoglycerate mutase from Priestia megaterium (strain DSM 319 / IMG 1521) (Bacillus megaterium).